The primary structure comprises 350 residues: Transmembrane protein 115 (350 aa).

Topologically, residues 1–19 (MQRALPGARQHLGAILASA) are cytoplasmic. The segment at 1-205 (MQRALPGARQ…FGLLSSWVYL (205 aa)) is mediates homooligomerization. The chain crosses the membrane as a helical span at residues 20-40 (SVVVKALCAVVLFLYLLSFAV). Residues 41-97 (DTGCLAVTPGYLFPPNFWIWTLATHGLMEQHVWDVAISLATVVVAGRLLEPLWGALE) lie on the Lumenal side of the membrane. A helical transmembrane segment spans residues 98–118 (LLIFFSVVNVSVGLLGALAYL). Over 119–126 (LTYMASFN) the chain is Cytoplasmic. The helical transmembrane segment at 127 to 147 (LVYLFTIRIHGALGFLGGVLV) threads the bilayer. Over 148–165 (ALKQTMGDCVVLRVPQVR) the chain is Lumenal. The helical transmembrane segment at 166 to 186 (VSVVPMLLLALLLLLRLATLL) threads the bilayer. Over 187-350 (QSPALASYGF…LITLETAPLL (164 aa)) the chain is Cytoplasmic. Residues 206 to 229 (RFYQRHSRGRGDMADHFAFATFFP) are mediates localization to the Golgi. The disordered stretch occupies residues 299–350 (EDQSAWPSMDDDEEEAGAKTDSPLPLEEASTPPGKVTVPESSLITLETAPLL). Thr-329 is subject to Phosphothreonine.

This sequence belongs to the TMEM115 family. In terms of assembly, homooligomer. Interacts with COPB1. May interact with LMAN1. Interacts with the COG complex; probably through COG3.

The protein resides in the golgi apparatus. It localises to the golgi stack membrane. Functionally, may play a role in retrograde transport of proteins from the Golgi to the endoplasmic reticulum. May indirectly play a role in protein glycosylation in the Golgi. This Mus musculus (Mouse) protein is Transmembrane protein 115.